Reading from the N-terminus, the 825-residue chain is Probable phosphoketolase (825 aa).

Belongs to the XFP family. It depends on thiamine diphosphate as a cofactor.

The polypeptide is Probable phosphoketolase (Schizosaccharomyces pombe (strain 972 / ATCC 24843) (Fission yeast)).